A 500-amino-acid polypeptide reads, in one-letter code: L-arabinose isomerase (500 aa).

Residues glutamate 306, glutamate 333, histidine 350, and histidine 450 each coordinate Mn(2+).

Belongs to the arabinose isomerase family. As to quaternary structure, homohexamer. Mn(2+) is required as a cofactor.

It catalyses the reaction beta-L-arabinopyranose = L-ribulose. It functions in the pathway carbohydrate degradation; L-arabinose degradation via L-ribulose; D-xylulose 5-phosphate from L-arabinose (bacterial route): step 1/3. Its function is as follows. Catalyzes the conversion of L-arabinose to L-ribulose. The chain is L-arabinose isomerase from Shigella flexneri serotype 5b (strain 8401).